A 142-amino-acid polypeptide reads, in one-letter code: Large ribosomal subunit protein uL11 (142 aa).

It belongs to the universal ribosomal protein uL11 family. In terms of assembly, part of the ribosomal stalk of the 50S ribosomal subunit. Interacts with L10 and the large rRNA to form the base of the stalk. L10 forms an elongated spine to which L12 dimers bind in a sequential fashion forming a multimeric L10(L12)X complex. Post-translationally, one or more lysine residues are methylated.

Forms part of the ribosomal stalk which helps the ribosome interact with GTP-bound translation factors. This chain is Large ribosomal subunit protein uL11, found in Rhodopseudomonas palustris (strain BisB5).